The following is a 207-amino-acid chain: Large ribosomal subunit protein bL25 (207 aa).

Residues 186-207 (SKPRGGAGAEGEADAEGEAAAE) form a disordered region. Over residues 196-207 (GEADAEGEAAAE) the composition is skewed to acidic residues.

This sequence belongs to the bacterial ribosomal protein bL25 family. CTC subfamily. Part of the 50S ribosomal subunit; part of the 5S rRNA/L5/L18/L25 subcomplex. Contacts the 5S rRNA. Binds to the 5S rRNA independently of L5 and L18.

In terms of biological role, this is one of the proteins that binds to the 5S RNA in the ribosome where it forms part of the central protuberance. The protein is Large ribosomal subunit protein bL25 of Methylobacillus flagellatus (strain ATCC 51484 / DSM 6875 / VKM B-1610 / KT).